The primary structure comprises 603 residues: F-box only protein 46 (603 aa).

The tract at residues 20 to 54 (YSQNQPRPPSATLKPPVCPDTSSGTEPDHRPAHLE) is disordered. Phosphoserine is present on residues serine 21 and serine 67. Disordered regions lie at residues 111-163 (GGSR…PTSS), 235-301 (EAQR…TRAK), 332-359 (EASE…ARDC), and 396-442 (TVSP…GTTD). Threonine 347 is subject to Phosphothreonine. Residues 347–356 (TPPAPPPPPA) are compositionally biased toward pro residues. Residues 470–522 (RQYMLLLPEHVLVKIFSFLPTRALAALKCTCHHFKGIIEAFGVRATDSRWSRD) form the F-box domain.

As to quaternary structure, part of a SCF (SKP1-cullin-F-box) protein ligase complex SCF(FBXO46) composed of CUL1, SKP1, RBX1 and FBXO46. In terms of processing, phosphorylated by ATM in response to DNA damage, promoting ubiquitination and degradation by the SCF(FBXO31) complex. ATM-phosphorylated FBXO46 is ubiquitinated and degradaded by the SCF(FBXO31) complex in response to DNA damage.

It functions in the pathway protein modification; protein ubiquitination. Functionally, substrate-recognition component of the SCF(FBXO46) protein ligase complex, which mediates the ubiquitination and degradation of target proteins. In absence of stress, the SCF(FBXO46) complex catalyzes ubiquitination and degradation of MTOR-phosphorylated FBXO31. This Rattus norvegicus (Rat) protein is F-box only protein 46 (Fbxo46).